We begin with the raw amino-acid sequence, 659 residues long: Chaperone protein DnaK (659 aa).

Residue threonine 201 is modified to Phosphothreonine; by autocatalysis. Positions 571–592 are enriched in basic and acidic residues; it reads RSALKEDAPTEKIKEASDELSR. Residues 571–659 are disordered; the sequence is RSALKEDAPT…DVEIVDKPND (89 aa). The span at 600 to 613 shows a compositional bias: low complexity; that stretch reads AMQSQSASAAANAQ.

This sequence belongs to the heat shock protein 70 family.

In terms of biological role, acts as a chaperone. In Chlamydia abortus (strain DSM 27085 / S26/3) (Chlamydophila abortus), this protein is Chaperone protein DnaK.